A 458-amino-acid polypeptide reads, in one-letter code: Fasciclin-like arabinogalactan protein 17 (458 aa).

Residues 1-30 form the signal peptide; it reads MDRRIYGGSAVIHLFLFFSVLIFSAASALS. An FAS1 1 domain is found at 43–184; the sequence is NSNSVLVALL…GLIHGIERLL (142 aa). The N-linked (GlcNAc...) asparagine glycan is linked to asparagine 80. A disordered region spans residues 207–262; the sequence is PEGAPEVDPRTNRLKKPAAPVPAGSPPALPIQSAMAPGPSLAPAPAPGPGGKQHHF. A compositionally biased stretch (pro residues) spans 225–235; sequence APVPAGSPPAL. In terms of domain architecture, FAS1 2 spans 268–411; that stretch reads VKDFIHTLLH…ISVQGIDGVL (144 aa). N-linked (GlcNAc...) asparagine glycosylation is present at asparagine 290.

The protein belongs to the fasciclin-like AGP family.

It localises to the secreted. May be a cell surface adhesion protein. This Arabidopsis thaliana (Mouse-ear cress) protein is Fasciclin-like arabinogalactan protein 17 (FLA17).